We begin with the raw amino-acid sequence, 258 residues long: Apolipoprotein E (258 aa).

Residues 1-19 (MRVWTVLLGAVLLLAACQA) form the signal peptide. 3 consecutive repeat copies span residues 112-133 (VDME…QVAG), 134-155 (QNLE…KRLA), and 156-173 (KDTE…KEAT). The segment at 112-173 (VDMEEAKTRV…KLEAYSKEAT (62 aa)) is 3 X 22 AA approximate tandem repeats.

The protein belongs to the apolipoprotein A1/A4/E family. Homotetramer.

The protein localises to the secreted. It localises to the extracellular space. Its subcellular location is the extracellular matrix. Its function is as follows. APOE is an apolipoprotein, a protein associating with lipid particles, that mainly functions in lipoprotein-mediated lipid transport between organs via the plasma and interstitial fluids. APOE is a core component of plasma lipoproteins and is involved in their production, conversion and clearance. Apolipoproteins are amphipathic molecules that interact both with lipids of the lipoprotein particle core and the aqueous environment of the plasma. The protein is Apolipoprotein E (APOE) of Alligator mississippiensis (American alligator).